We begin with the raw amino-acid sequence, 213 residues long: 3-demethoxyubiquinol 3-hydroxylase (213 aa).

Fe cation contacts are provided by E62, E92, H95, E144, E176, and H179.

This sequence belongs to the COQ7 family. The cofactor is Fe cation.

Its subcellular location is the cell membrane. The enzyme catalyses a 5-methoxy-2-methyl-3-(all-trans-polyprenyl)benzene-1,4-diol + AH2 + O2 = a 3-demethylubiquinol + A + H2O. It functions in the pathway cofactor biosynthesis; ubiquinone biosynthesis. In terms of biological role, catalyzes the hydroxylation of 2-nonaprenyl-3-methyl-6-methoxy-1,4-benzoquinol during ubiquinone biosynthesis. The chain is 3-demethoxyubiquinol 3-hydroxylase from Psychrobacter sp. (strain PRwf-1).